Reading from the N-terminus, the 316-residue chain is Ribonuclease Z (316 aa).

Residues H63, H65, D67, H68, H143, D213, and H271 each coordinate Zn(2+). Residue D67 is the Proton acceptor of the active site.

This sequence belongs to the RNase Z family. Homodimer. Zn(2+) is required as a cofactor.

It catalyses the reaction Endonucleolytic cleavage of RNA, removing extra 3' nucleotides from tRNA precursor, generating 3' termini of tRNAs. A 3'-hydroxy group is left at the tRNA terminus and a 5'-phosphoryl group is left at the trailer molecule.. Functionally, zinc phosphodiesterase, which displays some tRNA 3'-processing endonuclease activity. Probably involved in tRNA maturation, by removing a 3'-trailer from precursor tRNA. In Bacteroides thetaiotaomicron (strain ATCC 29148 / DSM 2079 / JCM 5827 / CCUG 10774 / NCTC 10582 / VPI-5482 / E50), this protein is Ribonuclease Z.